The chain runs to 1189 residues: MDEILYNDNVMIVNDEETSGDVNNQQLISNETIANIQTRLKQLQVSSDSDLEDYINARKMLIEMLNARKEYIPDVLSSLSVERLKSIDLIVQKLNSCEHSIIEHANILDQLQNEITSLKTENEYIVRLNDINAKKAKLFDDFNAKYEDDVGPLYVYAASEDVRQAAIYLSYMMRMIITFENETIESNFIVSDSLYIGDTILNVTISTDLQLGNRTVNVTMDDISESFVILEREYIELYLTRHVHKILNNTISYSTALVIFKRTVEDISIPSQIVNTVLFQQQISNSVTVKDVSKSLVCDFKIDAETELYILLPTIIPDSYSMDILGNQEFMLYLSDLYAFNLLQEILDVLYIDQLEKGLENEDNRAIEQLTLQNAQSIRYILNTLQYVPLYKPYDILIENGILNSIEYAAPLMYIKNEYISKNITRTSDKYTTDRVIGAHVLSGSNMDSLPNTAFKQKLFMNTQSVLTQENPIYEDTDIIIYAVCVISREYDDTICGSGYTYTTSNMYANRSEFIRMNGCIADSVPVKTSTIVKCTYSLIDANRIGLLYNKTRTNIKINQILICFKNSFAVPTSLNVAMDVKIQCLKKTETLSVTQAKPSQILLENGISYFGIICDISFSSDYVFDGNESINFTLQPNTNISGKKELVMYGRQGGGMQISDMFQHKQDSFEYSIKVGLVCNSTQIGMGQWFEIFSTLIQGEFIGNIDTLRESTIRGISNIYDFTDVREFLHEYKISIVKLSIQCLRAMSAGVQDVIVAYSHALSNIDALILDITVEMNDFSNRLTTLEDKVKDIEKWIQNQIDSQNTTIWGSLLDTFVNLIIATALGYATAGIGVLVTKISVAVLSFTSRALTSIARGLQAAGHKVSTLFKLHITQPFLNGAHSLKLLTQKFNAVQGNLTKYERKYITALELSEANNYAAIAKYLKNLNPEIKLAEAINHKLVYSSRYVNPVFKLGNEVMSTVEINYHGLTAIGKLPQLRTPTKKLLSSDFGTTLMKKNKAPAHAYMVITDVDARSEYDLVTKYILGVSEGFTSTTKHVTAGSFKLQYEFRKHPTTNKTTVSFSTYQDTGYTAEEVKLLFNRYFKNRTNITNANQQWELLSSKFMSLQTSTLNSQRFVLPTSHRTTALYEAFKNTRRFDYNLLTNNCQNFCQDSLNWLENGVINGSLIQHSDQLAIKYVNALRGDLSLI.

The PPPDE domain maps to Thr-981–Ser-1187. Residues His-1004 and Cys-1147 contribute to the active site.

The protein localises to the virion. The protein is Putative structural protein VP1 (S1) of Aedes pseudoscutellaris reovirus (isolate France) (ApRV).